Here is a 236-residue protein sequence, read N- to C-terminus: 1-(5-phosphoribosyl)-5-[(5-phosphoribosylamino)methylideneamino] imidazole-4-carboxamide isomerase (236 aa).

D8 functions as the Proton acceptor in the catalytic mechanism. D129 serves as the catalytic Proton donor.

This sequence belongs to the HisA/HisF family.

The protein localises to the cytoplasm. It carries out the reaction 1-(5-phospho-beta-D-ribosyl)-5-[(5-phospho-beta-D-ribosylamino)methylideneamino]imidazole-4-carboxamide = 5-[(5-phospho-1-deoxy-D-ribulos-1-ylimino)methylamino]-1-(5-phospho-beta-D-ribosyl)imidazole-4-carboxamide. It functions in the pathway amino-acid biosynthesis; L-histidine biosynthesis; L-histidine from 5-phospho-alpha-D-ribose 1-diphosphate: step 4/9. In Methanosphaerula palustris (strain ATCC BAA-1556 / DSM 19958 / E1-9c), this protein is 1-(5-phosphoribosyl)-5-[(5-phosphoribosylamino)methylideneamino] imidazole-4-carboxamide isomerase.